The primary structure comprises 323 residues: Methionyl-tRNA formyltransferase (323 aa).

Position 113 to 116 (113 to 116 (SLLP)) interacts with (6S)-5,6,7,8-tetrahydrofolate.

It belongs to the Fmt family.

It catalyses the reaction L-methionyl-tRNA(fMet) + (6R)-10-formyltetrahydrofolate = N-formyl-L-methionyl-tRNA(fMet) + (6S)-5,6,7,8-tetrahydrofolate + H(+). In terms of biological role, attaches a formyl group to the free amino group of methionyl-tRNA(fMet). The formyl group appears to play a dual role in the initiator identity of N-formylmethionyl-tRNA by promoting its recognition by IF2 and preventing the misappropriation of this tRNA by the elongation apparatus. The polypeptide is Methionyl-tRNA formyltransferase (Porphyromonas gingivalis (strain ATCC BAA-308 / W83)).